The following is a 495-amino-acid chain: Tubulin epsilon and delta complex protein 1 (495 aa).

Residues 355-387 (GGELDLVVRELQALEEELREAAERRRAAWEAKA) are a coiled coil. The interval 417 to 440 (CWERDGGPAQPHGPHRLVRREDGA) is disordered. Residues 452–480 (IRTLRSQEACLEAVLRRLQGQCRQELARL) are a coiled coil.

Interacts with TEDC2. Found in a complex with TEDC1, TEDC2, TUBE1 and TUBD1.

It is found in the cell projection. The protein resides in the cilium. Its subcellular location is the cytoplasm. The protein localises to the cytoskeleton. It localises to the microtubule organizing center. It is found in the centrosome. The protein resides in the centriole. Its function is as follows. Acts as a positive regulator of ciliary hedgehog signaling. Required for centriole stability. May play a role in counteracting perturbation of actin filaments, such as after treatment with the actin depolymerizing microbial metabolite Chivosazole F. This chain is Tubulin epsilon and delta complex protein 1, found in Homo sapiens (Human).